The sequence spans 425 residues: Inositol hexakisphosphate kinase 2 (425 aa).

ATP-binding positions include 206-208 and D219; that span reads ENL. Substrate is bound by residues 215–223, K221, and 235–242; these read PCVLDLKMG and KAANQIRK. Residue D382 coordinates ATP. H385 contributes to the substrate binding site.

This sequence belongs to the inositol phosphokinase (IPK) family. Detected in kidney, intestine, liver and heart.

It is found in the nucleus. It carries out the reaction 1D-myo-inositol hexakisphosphate + ATP = 5-diphospho-1D-myo-inositol 1,2,3,4,6-pentakisphosphate + ADP. Its pathway is phospholipid metabolism; phosphatidylinositol metabolism. Converts inositol hexakisphosphate (InsP6) to diphosphoinositol pentakisphosphate (InsP7/PP-InsP5). This chain is Inositol hexakisphosphate kinase 2 (IP6K2), found in Oryctolagus cuniculus (Rabbit).